The sequence spans 120 residues: Large ribosomal subunit protein eL8 (120 aa).

This sequence belongs to the eukaryotic ribosomal protein eL8 family. As to quaternary structure, part of the 50S ribosomal subunit. Probably part of the RNase P complex.

The protein localises to the cytoplasm. In terms of biological role, multifunctional RNA-binding protein that recognizes the K-turn motif in ribosomal RNA, the RNA component of RNase P, box H/ACA, box C/D and box C'/D' sRNAs. The sequence is that of Large ribosomal subunit protein eL8 from Halorubrum lacusprofundi (strain ATCC 49239 / DSM 5036 / JCM 8891 / ACAM 34).